Consider the following 135-residue polypeptide: Ribosome-binding factor A (135 aa).

It belongs to the RbfA family. In terms of assembly, monomer. Binds 30S ribosomal subunits, but not 50S ribosomal subunits or 70S ribosomes.

The protein resides in the cytoplasm. Its function is as follows. One of several proteins that assist in the late maturation steps of the functional core of the 30S ribosomal subunit. Associates with free 30S ribosomal subunits (but not with 30S subunits that are part of 70S ribosomes or polysomes). Required for efficient processing of 16S rRNA. May interact with the 5'-terminal helix region of 16S rRNA. The protein is Ribosome-binding factor A of Methylobacterium nodulans (strain LMG 21967 / CNCM I-2342 / ORS 2060).